The primary structure comprises 693 residues: Polyribonucleotide nucleotidyltransferase (693 aa).

Asp489 and Asp495 together coordinate Mg(2+). Residues 556-615 (PQIHVMNINPAKIKDVVGRGGATVKGIVEKTGAQIDTSDSGEVKVFAKDKKSMDMAVAMI) enclose the KH domain. The 69-residue stretch at 625–693 (GQVYKGKIVK…GRVKLSLVAR (69 aa)) folds into the S1 motif domain.

It belongs to the polyribonucleotide nucleotidyltransferase family. As to quaternary structure, component of the RNA degradosome, which is a multiprotein complex involved in RNA processing and mRNA degradation. The cofactor is Mg(2+).

It localises to the cytoplasm. The enzyme catalyses RNA(n+1) + phosphate = RNA(n) + a ribonucleoside 5'-diphosphate. Its function is as follows. Involved in mRNA degradation. Catalyzes the phosphorolysis of single-stranded polyribonucleotides processively in the 3'- to 5'-direction. This chain is Polyribonucleotide nucleotidyltransferase, found in Francisella tularensis subsp. mediasiatica (strain FSC147).